The primary structure comprises 376 residues: Growth/differentiation factor 8 (376 aa).

An N-terminal signal peptide occupies residues 1–22; sequence MHLSQIVLYLSLLIALGPVVLS. A propeptide spanning residues 23-267 is cleaved from the precursor; it reads DQEAHQQPSV…ISEGPRRARR (245 aa). Cystine bridges form between C273–C283, C282–C341, C310–C373, and C314–C375.

It belongs to the TGF-beta family. Homodimer; disulfide-linked. Highly expressed in muscle. Also expressed in other tissues such as eye, gill, ovary, gut and brain. Very low level detected in testis. Not expressed in liver, kidney, stomach or heart.

The protein localises to the secreted. Functionally, acts specifically as a negative regulator of skeletal muscle growth. This is Growth/differentiation factor 8 from Oreochromis mossambicus (Mozambique tilapia).